A 227-amino-acid chain; its full sequence is uncharacterized protein (227 aa).

The signal sequence occupies residues 1 to 23 (MKKLTVTFLTFISIFFAATAAFA).

This is an uncharacterized protein from Coxiella burnetii (strain RSA 493 / Nine Mile phase I).